We begin with the raw amino-acid sequence, 823 residues long: Putative E3 ubiquitin-protein ligase RF4 (823 aa).

Disordered stretches follow at residues 24–72 (TVSP…NGSV), 224–291 (SKLS…CSGS), and 432–464 (ESVT…SEEK). Positions 61 to 72 (KPQNHLSGNGSV) are enriched in polar residues. The span at 224 to 240 (SKLSDSESLGAESNPPK) shows a compositional bias: low complexity. Over residues 267 to 282 (FPNTPNSKKTQSSGTT) the composition is skewed to polar residues. The span at 453 to 464 (SEKKSGSESEEK) shows a compositional bias: basic and acidic residues. Positions 536 to 738 (ELKALRKERE…ELKLKSDYSR (203 aa)) form a coiled coil. The RING-type zinc-finger motif lies at 768-808 (CVMCLSEEMSVIFLPCAHQVLCFKCNQLHEKEGMMDCPSCR).

Belongs to the RING-type zinc finger family.

It carries out the reaction S-ubiquitinyl-[E2 ubiquitin-conjugating enzyme]-L-cysteine + [acceptor protein]-L-lysine = [E2 ubiquitin-conjugating enzyme]-L-cysteine + N(6)-ubiquitinyl-[acceptor protein]-L-lysine.. The protein operates within protein modification; protein ubiquitination. The chain is Putative E3 ubiquitin-protein ligase RF4 (RF4) from Arabidopsis thaliana (Mouse-ear cress).